A 319-amino-acid polypeptide reads, in one-letter code: Phospho-N-acetylmuramoyl-pentapeptide-transferase (319 aa).

The next 9 membrane-spanning stretches (helical) occupy residues 5 to 25 (LIAFMISLVLSALLFPWLIIW), 51 to 71 (TMGGTVFVLSAAVATVAICAY), 79 to 99 (VWILLVALLGYGIIGFLDDGL), 119 to 139 (LLVAAGIVLLAASDNFDFALY), 149 to 169 (VVLFTLFEVFWLVGFSNAVNL), 173 to 193 (LDGLATGLSFIAYGTYAWLAF), 197 to 217 (NFGVLVFCMAVMGGLAAFFMF), 224 to 246 (IFMGDAGSLALGGGLAAVSIFLG), and 299 to 319 (VDLVFWLVGLVGSGIYLMIWG).

It belongs to the glycosyltransferase 4 family. MraY subfamily. It depends on Mg(2+) as a cofactor.

It is found in the cell membrane. It catalyses the reaction UDP-N-acetyl-alpha-D-muramoyl-L-alanyl-gamma-D-glutamyl-L-lysyl-D-alanyl-D-alanine + di-trans,octa-cis-undecaprenyl phosphate = Mur2Ac(oyl-L-Ala-gamma-D-Glu-L-Lys-D-Ala-D-Ala)-di-trans,octa-cis-undecaprenyl diphosphate + UMP. It functions in the pathway cell wall biogenesis; peptidoglycan biosynthesis. Functionally, catalyzes the initial step of the lipid cycle reactions in the biosynthesis of the cell wall peptidoglycan: transfers peptidoglycan precursor phospho-MurNAc-pentapeptide from UDP-MurNAc-pentapeptide onto the lipid carrier undecaprenyl phosphate, yielding undecaprenyl-pyrophosphoryl-MurNAc-pentapeptide, known as lipid I. The polypeptide is Phospho-N-acetylmuramoyl-pentapeptide-transferase (Lactobacillus delbrueckii subsp. bulgaricus (strain ATCC BAA-365 / Lb-18)).